Consider the following 350-residue polypeptide: Putative [LysW]-lysine/[LysW]-ornithine hydrolase (350 aa).

His-72 contributes to the Zn(2+) binding site. Asp-74 is a catalytic residue. Zn(2+) is bound at residue Asp-96. Glu-128 functions as the Proton acceptor in the catalytic mechanism. Zn(2+) contacts are provided by Glu-129, Glu-152, and His-321.

Belongs to the peptidase M20A family. LysK subfamily. It depends on Zn(2+) as a cofactor. Co(2+) is required as a cofactor.

It is found in the cytoplasm. It catalyses the reaction [amino-group carrier protein]-C-terminal-gamma-(L-lysyl)-L-glutamate + H2O = [amino-group carrier protein]-C-terminal-L-glutamate + L-lysine. The enzyme catalyses [amino-group carrier protein]-C-terminal-gamma-(L-ornithyl)-L-glutamate + H2O = [amino-group carrier protein]-C-terminal-L-glutamate + L-ornithine. Its pathway is amino-acid biosynthesis; L-lysine biosynthesis via AAA pathway; L-lysine from L-alpha-aminoadipate (Thermus route): step 5/5. It functions in the pathway amino-acid biosynthesis; L-arginine biosynthesis. Its function is as follows. Catalyzes the release of L-lysine from [LysW]-gamma-L-lysine and the release of L-ornithine from [LysW]-L-ornithine. The polypeptide is Putative [LysW]-lysine/[LysW]-ornithine hydrolase (Aeropyrum pernix (strain ATCC 700893 / DSM 11879 / JCM 9820 / NBRC 100138 / K1)).